The chain runs to 182 residues: Transmembrane protein 11 homolog, mitochondrial (182 aa).

Ser25 carries the post-translational modification Phosphoserine. A run of 2 helical transmembrane segments spans residues 70–89 (TAVA…RDRP) and 91–108 (IAAP…LYTV).

Belongs to the TMEM11 family.

The protein localises to the mitochondrion inner membrane. Plays a role in mitochondrial morphogenesis. The sequence is that of Transmembrane protein 11 homolog, mitochondrial (Pmi) from Drosophila melanogaster (Fruit fly).